The sequence spans 492 residues: MRVSEPSDVVIRSDDTCHIHLTWSGSECDKYPAKQHARKVAMKLGVSSGLIYLVGQPTVNWGDSDQPQPFRQRRYFYYLSGIDEPDCYLTYDIQADLLTLYVPDFDLRRAVWMGPTLTIEEAHKQSDVDRVNFFAALQHDLEWWTTKNKGTRPIYVLHDSQQPLIPSKRLWLDNERLLPAMNAARVIKDEYELRMIRQANYISGLAHRKILEDIHRMSTEAEIESSFLATCVSHGAKNQSYAIIAGSGENAAVLHYVKNNEPLDGRQLVCLDAGAEWRCYASDVTRTIPLWTDWPSERARNIYRVVEEMQEECIRRIRKGVRFRDLQLLAHDIAIKGLQKLDILTNDCTSAIYESGASAVFFPHGLGHHVGLEVHDVSKRPITALDGNQANWGNHNFVPLLTDSSWSVPLLDEGMVVTIEPGIYFNRLALLNAQNQPLAKYINFDEAEKYIPIGGVRIEDDILVTAKGYENLTTAPKGEEMLEIIRRGIDNS.

Aspartate 272, aspartate 283, glutamate 420, and glutamate 459 together coordinate Mn(2+).

It belongs to the peptidase M24B family. Mn(2+) serves as cofactor.

It catalyses the reaction Release of any N-terminal amino acid, including proline, that is linked to proline, even from a dipeptide or tripeptide.. Its function is as follows. Catalyzes the removal of a penultimate prolyl residue from the N-termini of peptides. This Aspergillus oryzae (strain ATCC 42149 / RIB 40) (Yellow koji mold) protein is Probable Xaa-Pro aminopeptidase AO090005001240.